The following is a 402-amino-acid chain: MSETLLNPYFGEFGGMYVPEILMPVLKNLEKAFVEAQQDPTFKETFLDLLKNYAGRPTALTRCRNLTQGSKTKLYLKREDLLHGGAHKTNQVLGQILLAKRMGKTRIIAETGAGQHGVATALACAMLGMPCQIYMGAKDVERQSPNVFRMRLMGANVTAVTKGSASLKDACCEAMRDWAENYEHTHYLLGTAAGPHPFPTIVREFQKIIGEETKQQILAREGRLPDAVIAAVGGGSNAIGMFNDFIEETSVRLIGVEPAGKGIATGQHGAPLGHGTTGIYFGMKAPLMQTPDGQIEESYSISAGLDFPSVGPQHAHLQAIGRAQYESITDDEALSAFQALARHEGIIPALESAHALAYALKLIQRQPEKEQLLVVNLSGRGDKDIFTVDRILSQKGVSYAPF.

Residue Lys88 is modified to N6-(pyridoxal phosphate)lysine.

Belongs to the TrpB family. In terms of assembly, tetramer of two alpha and two beta chains. Pyridoxal 5'-phosphate serves as cofactor.

The enzyme catalyses (1S,2R)-1-C-(indol-3-yl)glycerol 3-phosphate + L-serine = D-glyceraldehyde 3-phosphate + L-tryptophan + H2O. It participates in amino-acid biosynthesis; L-tryptophan biosynthesis; L-tryptophan from chorismate: step 5/5. Functionally, the beta subunit is responsible for the synthesis of L-tryptophan from indole and L-serine. In Pasteurella multocida (strain Pm70), this protein is Tryptophan synthase beta chain (trpB).